A 309-amino-acid chain; its full sequence is Probable RuBisCO transcriptional regulator (309 aa).

Residues 6–63 (FTLDQLRILKAIVKEGSFKRAADSLYVSQPAISLQIQNLEKQLNIPLFERSNKKATLT) form the HTH lysR-type domain. Positions 23 to 42 (FKRAADSLYVSQPAISLQIQ) form a DNA-binding region, H-T-H motif.

This sequence belongs to the LysR transcriptional regulatory family.

The protein localises to the plastid. It is found in the chloroplast. In terms of biological role, trans-acting transcriptional regulator of RuBisCO genes (rbcL and rbcS) expression. This chain is Probable RuBisCO transcriptional regulator (rbcR), found in Gracilaria tenuistipitata var. liui (Red alga).